The following is a 158-amino-acid chain: uncharacterized protein (158 aa).

The next 2 membrane-spanning stretches (helical) occupy residues 10 to 30 (LFFI…LNHF) and 40 to 60 (YITF…NFFL).

It localises to the membrane. This is an uncharacterized protein from Schizosaccharomyces pombe (strain 972 / ATCC 24843) (Fission yeast).